The primary structure comprises 372 residues: Cytochrome b (372 aa).

The next 4 helical transmembrane spans lie at 25-45 (FGSMLLTCSALQIMTGFFLSM), 69-90 (WMMQNLHAIGASMFFICVYIHV), 105-125 (WLSGTTLLIMLMATAFFGYVL), and 170-190 (FFALHFILPFGIISLSSLHIM). Positions 75 and 89 each coordinate heme b. Heme b-binding residues include His-174 and His-188. His-193 lines the a ubiquinone pocket. Transmembrane regions (helical) follow at residues 218–238 (YKDLFMISSMIMIMLLTISFI), 280–300 (LGGALALAMSITILLTVPFTH), 312–332 (FMQLMFWTLVTTFMIITWTAT), and 339–358 (YTMISQVTSSLYFMFFMSNP).

This sequence belongs to the cytochrome b family. In terms of assembly, the cytochrome bc1 complex contains 3 respiratory subunits (MT-CYB, CYC1 and UQCRFS1), 2 core proteins (UQCRC1 and UQCRC2) and probably 6 low-molecular weight proteins. Heme b is required as a cofactor.

Its subcellular location is the mitochondrion inner membrane. Functionally, component of the ubiquinol-cytochrome c reductase complex (complex III or cytochrome b-c1 complex) that is part of the mitochondrial respiratory chain. The b-c1 complex mediates electron transfer from ubiquinol to cytochrome c. Contributes to the generation of a proton gradient across the mitochondrial membrane that is then used for ATP synthesis. This is Cytochrome b (MT-CYB) from Acrantophis dumerili (Dumeril's ground boa).